Consider the following 49-residue polypeptide: Osteocalcin (49 aa).

One can recognise a Gla domain in the interval 1–47 (YLDHGLGAPAPYVDPLEPKREVCELNPDCDELADQMGFQEAYRRFYG). Position 9 is a 4-hydroxyproline (Pro-9). Glu-17, Glu-21, Glu-24, and Asp-30 together coordinate Ca(2+). Residues Glu-17, Glu-21, and Glu-24 each carry the 4-carboxyglutamate modification. Cys-23 and Cys-29 form a disulfide bridge.

The protein belongs to the osteocalcin/matrix Gla protein family. In terms of processing, gamma-carboxyglutamic acid residues are formed by vitamin K dependent carboxylation. These residues are essential for the binding of calcium.

The protein resides in the secreted. The carboxylated form is one of the main organic components of the bone matrix, which constitutes 1-2% of the total bone protein: it acts as a negative regulator of bone formation and is required to limit bone formation without impairing bone resorption or mineralization. The carboxylated form binds strongly to apatite and calcium. Functionally, the uncarboxylated form acts as a hormone secreted by osteoblasts, which regulates different cellular processes, such as energy metabolism, male fertility and brain development. Regulates of energy metabolism by acting as a hormone favoring pancreatic beta-cell proliferation, insulin secretion and sensitivity and energy expenditure. Uncarboxylated osteocalcin hormone also promotes testosterone production in the testes: acts as a ligand for G protein-coupled receptor GPRC6A at the surface of Leydig cells, initiating a signaling response that promotes the expression of enzymes required for testosterone synthesis in a CREB-dependent manner. Also acts as a regulator of brain development: osteocalcin hormone crosses the blood-brain barrier and acts as a ligand for GPR158 on neurons, initiating a signaling response that prevents neuronal apoptosis in the hippocampus, favors the synthesis of all monoamine neurotransmitters and inhibits that of gamma-aminobutyric acid (GABA). Osteocalcin also crosses the placenta during pregnancy and maternal osteocalcin is required for fetal brain development. This is Osteocalcin from Lama guanicoe (Guanaco).